The sequence spans 126 residues: MATINQLVRKPRVDVKKKSNVPALESCPQRRGVCTRVYTTTPKKPNSAMRKVARVRLTNGFEVTSYIGGEGHNLQEHSVVLIRGGRVKDLPGVRYHTVRGSLDTSGVNDRKQGRSKYGTKKPKDKK.

Aspartate 89 bears the 3-methylthioaspartic acid mark. The segment at 99-126 (RGSLDTSGVNDRKQGRSKYGTKKPKDKK) is disordered. The span at 113-126 (GRSKYGTKKPKDKK) shows a compositional bias: basic residues.

It belongs to the universal ribosomal protein uS12 family. In terms of assembly, part of the 30S ribosomal subunit. Contacts proteins S8 and S17. May interact with IF1 in the 30S initiation complex.

In terms of biological role, with S4 and S5 plays an important role in translational accuracy. Functionally, interacts with and stabilizes bases of the 16S rRNA that are involved in tRNA selection in the A site and with the mRNA backbone. Located at the interface of the 30S and 50S subunits, it traverses the body of the 30S subunit contacting proteins on the other side and probably holding the rRNA structure together. The combined cluster of proteins S8, S12 and S17 appears to hold together the shoulder and platform of the 30S subunit. This Legionella pneumophila (strain Paris) protein is Small ribosomal subunit protein uS12.